A 382-amino-acid polypeptide reads, in one-letter code: Gap junction alpha-1 protein (382 aa).

Over 2–23 (GGWSALAKLLGKVQAYSPAGGK) the chain is Cytoplasmic. Ser5 bears the Phosphoserine mark. The helical transmembrane segment at 24–44 (VWLSVLFIFRILLLGTAVESA) threads the bilayer. At 45 to 76 (WGDEQSAFRCNTQQPGCENVCYDKSFPISHVR) the chain is on the extracellular side. Intrachain disulfides connect Cys54–Cys192 and Cys187–Cys198. Residues 77–97 (FWVLQIIFVSVPTLLYLAHVF) form a helical membrane-spanning segment. Topologically, residues 98–155 (YVMRKEEKLNKKEEELKVAQTDGANVDMHLKQIEIKKFKYGIEEHGKVKMRGGLLRTY) are cytoplasmic. Lys144 is covalently cross-linked (Glycyl lysine isopeptide (Lys-Gly) (interchain with G-Cter in SUMO)). Residues 156–176 (IISILFKSVFEVAFLLIQWYI) traverse the membrane as a helical segment. The Extracellular segment spans residues 177–207 (YGFSLSAVYTCKREPCPHQVDCFLSRPTEKT). Residues 208-228 (IFIIFMLVVSLVSLALNIIEL) traverse the membrane as a helical segment. Topologically, residues 229–382 (FYVFFKGVKD…SRPRPDDLEI (154 aa)) are cytoplasmic. Lys237 is covalently cross-linked (Glycyl lysine isopeptide (Lys-Gly) (interchain with G-Cter in SUMO)). The interval 244 to 382 (SDPYHATTGP…SRPRPDDLEI (139 aa)) is interaction with NOV. Tyr247 bears the Phosphotyrosine mark. Phosphoserine occurs at positions 255, 257, and 262. Positions 264 to 382 (EYAYFNGCSS…SRPRPDDLEI (119 aa)) are interaction with UBQLN4. Cys271 carries the post-translational modification S-nitrosocysteine. A Phosphothreonine modification is found at Thr275. Phosphoserine occurs at positions 306 and 314. Residues 317-332 (QNRMGQAGSTISNSHA) show a composition bias toward polar residues. The interval 317–382 (QNRMGQAGST…SRPRPDDLEI (66 aa)) is disordered. Ser325 is subject to Phosphoserine; by CK1. Thr326 bears the Phosphothreonine mark. Phosphoserine; by CK1 occurs at positions 328 and 330. 2 positions are modified to phosphoserine: Ser344 and Ser365. The segment covering 362–374 (RPSSRASSRASSR) has biased composition (low complexity). Residue Ser368 is modified to Phosphoserine; by PKC/PRKCG and PKC/PRKCD. Phosphoserine is present on residues Ser369 and Ser373.

This sequence belongs to the connexin family. Alpha-type (group II) subfamily. A connexon is composed of a hexamer of connexins. Interacts with SGSM3. Interacts with RIC1/CIP150. Interacts with CNST and CSNK1D. Interacts (via C-terminus) with TJP1. Interacts (via C-terminus) with SRC (via SH3 domain). Interacts (not ubiquitinated) with UBQLN4 (via UBA domain). Interacts with NOV. Interacts with TMEM65. Interacts with ANK3/ANKG and PKP2. In terms of processing, phosphorylation at Ser-325, Ser-328 and Ser-330 by CK1 modulates gap junction assembly. Phosphorylated at Ser-368 by PRKCG; phosphorylation induces disassembly of gap junction plaques and inhibition of gap junction activity. Phosphorylation at Ser-368 by PRKCD triggers its internalization into small vesicles leading to proteasome-mediated degradation. Sumoylated with SUMO1, SUMO2 and SUMO3, which may regulate the level of functional Cx43 gap junctions at the plasma membrane. May be desumoylated by SENP1 or SENP2. Post-translationally, S-nitrosylation at Cys-271 is enriched at the muscle endothelial gap junction in arteries, it augments channel permeability and may regulate of smooth muscle cell to endothelial cell communication. In terms of processing, acetylated in the developing cortex; leading to delocalization from the cell membrane.

It is found in the cell membrane. The protein localises to the cell junction. Its subcellular location is the gap junction. It localises to the endoplasmic reticulum. Its function is as follows. Gap junction protein that acts as a regulator of bladder capacity. A gap junction consists of a cluster of closely packed pairs of transmembrane channels, the connexons, through which materials of low MW diffuse from one cell to a neighboring cell. May play a critical role in the physiology of hearing by participating in the recycling of potassium to the cochlear endolymph. Negative regulator of bladder functional capacity: acts by enhancing intercellular electrical and chemical transmission, thus sensitizing bladder muscles to cholinergic neural stimuli and causing them to contract. May play a role in cell growth inhibition through the regulation of NOV expression and localization. Plays an essential role in gap junction communication in the ventricles. In Canis lupus familiaris (Dog), this protein is Gap junction alpha-1 protein (GJA1).